Reading from the N-terminus, the 114-residue chain is Iron-sulfur cluster insertion protein ErpA (114 aa).

Residues Cys42, Cys106, and Cys108 each contribute to the iron-sulfur cluster site.

It belongs to the HesB/IscA family. As to quaternary structure, homodimer. It depends on iron-sulfur cluster as a cofactor.

Its function is as follows. Required for insertion of 4Fe-4S clusters for at least IspG. This Salmonella typhi protein is Iron-sulfur cluster insertion protein ErpA.